We begin with the raw amino-acid sequence, 384 residues long: F-box only protein 5 (384 aa).

The tract at residues 25-67 (EVKGHKVSPRKTGALSLRSPAATNVSTPLESRSKGPHNKENYQ) is disordered. Positions 45–54 (AATNVSTPLE) are enriched in polar residues. The span at 55–67 (SRSKGPHNKENYQ) shows a compositional bias: basic and acidic residues. Residues 187–234 (CKLMRKDMRHILARILGLLGDCDLISCTKVSRTWRKIICQDQLALQRW) enclose the F-box domain. A ZBR-type zinc finger spans residues 311 to 359 (SLRRCSRCSSPARFDAVMQRAVCTRISCAFEFCTLCQSAFHDSTPCRNT). Residues Cys-315, Cys-318, Cys-333, Cys-338, Cys-343, Cys-346, His-351, and Cys-356 each contribute to the Zn(2+) site.

As to quaternary structure, part of a SCF (SKP1-cullin-F-box) protein ligase complex.

It localises to the nucleus. The protein localises to the cytoplasm. Its pathway is protein modification; protein ubiquitination. Its function is as follows. During embryonic development, regulates the integrity of the genome and therefore the cell cycle progression by preventing rereplication through an APC-Cdh1-dependent mechanism. This Danio rerio (Zebrafish) protein is F-box only protein 5.